The following is a 509-amino-acid chain: Cytochrome P450 monooxygenase LUC2 (509 aa).

The helical transmembrane segment at 30–50 (TKVLVTFLTIVIIAPRVFTVI) threads the bilayer. Cys-456 serves as a coordination point for heme.

Belongs to the cytochrome P450 family. It depends on heme as a cofactor.

The protein resides in the membrane. It participates in mycotoxin biosynthesis. Cytochrome P450 monooxygenase; part of the gene cluster that mediates the biosynthesis of the mycotoxin lucilactaene and the lucilactaene-related compound NG-391 that act as cell cycle inhibitors with potent growth inhibitory activity against malarial parasites, moderate growth inhibitory activity against cancer cells, and no activity against bacteria and fungi. Within the pathway, LUC2 performs C-20 methyl group hydroxylation of several intermediates. LUC2 does not perform the full oxidation of the C-20 methyl group into carboxylic acid, which is a prerequisite for the final methylation step. The pathway begins with the hybrid PKS-NRPS synthetase LUC5 which is responsible for the condensation of one acetyl-coenzyme A (CoA) unit with six malonyl-CoA units and the amide linkage of the arising heptaketide and homoserine, subsequently releasing the first intermediate prelucilactaene B. Both the cytochrome P450 monooxygenase LUC2 and the hydrolase LUC6 function in parallel in modification of prelucilactaene B. LUC6 may catalyze the 2-pyrrolidone ring formation to form prelucilactaene C from prelucilactaene B, followed by C-15 hydroxylation by the same enzyme to give prelucilactaene D, which is then converted to prelucilactaene E by epoxidation, and finally to prelucilactaene F by cyclization. Prelucilactane D, prelucilactaene E, and prelucilactaene F can be converted to dihydrolucilactaene, NG391, and lucilactaene, respectively, via C-20 methyl group hydroxylation by the cytochrome P450 monooxygenase LUC2. However, LUC2, unlike FUS8 in fusarin C biosynthesis, is not enough for the full oxidation of the C-20 methyl group into carboxylic acid, which is a prerequisite for the final methylation step. The aldehyde dehydrogenase LUC3 is involved in the biosynthesis by further oxidation of the C-20 alcoholic analog prelucilactaene G into a carboxylic derivative. This unidentified carboxylic derivative may be converted to demethyllucilactaene. As the last step, the methyltransferase LUC1 methylates the hydroxyl group at C-21 of demethyllucilactaene to generate lucilactaene. This is Cytochrome P450 monooxygenase LUC2 from Fusarium sp.